A 163-amino-acid chain; its full sequence is Nucleotide-binding protein BcerKBAB4_1061 (163 aa).

This sequence belongs to the YajQ family.

In terms of biological role, nucleotide-binding protein. The chain is Nucleotide-binding protein BcerKBAB4_1061 from Bacillus mycoides (strain KBAB4) (Bacillus weihenstephanensis).